The following is a 340-amino-acid chain: GTP 3',8-cyclase (340 aa).

Residues 8–227 (KLGRPIRDLR…EMIEQNFDIE (220 aa)) form the Radical SAM core domain. GTP is bound at residue Arg17. 2 residues coordinate [4Fe-4S] cluster: Cys24 and Cys28. Tyr30 serves as a coordination point for S-adenosyl-L-methionine. Cys31 serves as a coordination point for [4Fe-4S] cluster. Arg71 contributes to the GTP binding site. Position 75 (Gly75) interacts with S-adenosyl-L-methionine. Residue Thr102 participates in GTP binding. Ser126 is a binding site for S-adenosyl-L-methionine. Lys163 is a GTP binding site. Residue Met197 coordinates S-adenosyl-L-methionine. Positions 261 and 264 each coordinate [4Fe-4S] cluster. A GTP-binding site is contributed by 266–268 (RAR). Cys278 serves as a coordination point for [4Fe-4S] cluster.

The protein belongs to the radical SAM superfamily. MoaA family. As to quaternary structure, monomer and homodimer. It depends on [4Fe-4S] cluster as a cofactor.

It catalyses the reaction GTP + AH2 + S-adenosyl-L-methionine = (8S)-3',8-cyclo-7,8-dihydroguanosine 5'-triphosphate + 5'-deoxyadenosine + L-methionine + A + H(+). It participates in cofactor biosynthesis; molybdopterin biosynthesis. Its function is as follows. Catalyzes the cyclization of GTP to (8S)-3',8-cyclo-7,8-dihydroguanosine 5'-triphosphate. The sequence is that of GTP 3',8-cyclase from Staphylococcus saprophyticus subsp. saprophyticus (strain ATCC 15305 / DSM 20229 / NCIMB 8711 / NCTC 7292 / S-41).